The primary structure comprises 162 residues: Phosphopantetheine adenylyltransferase (162 aa).

A substrate-binding site is contributed by S9. ATP contacts are provided by residues 9-10 (SF) and H17. K41, L77, and K91 together coordinate substrate. ATP is bound by residues 92–94 (GLR), E102, and 126–132 (YAFLSSS).

It belongs to the bacterial CoaD family. As to quaternary structure, homohexamer. It depends on Mg(2+) as a cofactor.

It is found in the cytoplasm. It carries out the reaction (R)-4'-phosphopantetheine + ATP + H(+) = 3'-dephospho-CoA + diphosphate. It functions in the pathway cofactor biosynthesis; coenzyme A biosynthesis; CoA from (R)-pantothenate: step 4/5. In terms of biological role, reversibly transfers an adenylyl group from ATP to 4'-phosphopantetheine, yielding dephospho-CoA (dPCoA) and pyrophosphate. The sequence is that of Phosphopantetheine adenylyltransferase from Parafrankia sp. (strain EAN1pec).